The sequence spans 243 residues: MGQKVNPISNRLGIIRGWDSNWYGGNDYGDSLLEDSKIRKYLNARLAKASVSRIVIERTLKLVTITVCTARPGIIIGKGGQEVDKLKEELKKVTDKDIQINIFEVKRPELDAVIVANNIARQVEGKIAYRRAIKMAIANTMRMGAEGIKIQISGRLNGAEMARSEMYKEGRTPLHTFRADIDYCHAEALTKVGLLGIKVWICRGEVFGKKELAPNFTQSKESGRGNNGGNNGGKNFKRKKNNR.

The region spanning 38-106 (IRKYLNARLA…DIQINIFEVK (69 aa)) is the KH type-2 domain. The tract at residues 214 to 243 (PNFTQSKESGRGNNGGNNGGKNFKRKKNNR) is disordered.

The protein belongs to the universal ribosomal protein uS3 family. Part of the 30S ribosomal subunit. Forms a tight complex with proteins S10 and S14.

In terms of biological role, binds the lower part of the 30S subunit head. Binds mRNA in the 70S ribosome, positioning it for translation. The protein is Small ribosomal subunit protein uS3 of Bacteroides thetaiotaomicron (strain ATCC 29148 / DSM 2079 / JCM 5827 / CCUG 10774 / NCTC 10582 / VPI-5482 / E50).